Here is a 277-residue protein sequence, read N- to C-terminus: Carbonyl reductase [NADPH] 1 (277 aa).

Ser-2 bears the N-acetylserine mark. Phosphoserine is present on residues Ser-2 and Ser-30. NADP(+) is bound by residues 10–34, 63–64, and Asn-90; these read VTGANKGIGFVIVRDLCRRFSGDVV and DI. Glutathione-binding positions include 95–97 and Gln-106; that span reads FKT. Residue Ser-140 coordinates substrate. Residue 193-194 coordinates glutathione; sequence AY. The Proton acceptor role is filled by Tyr-194. Residues 194 to 198 and 231 to 233 contribute to the NADP(+) site; these read YGVTK and VRT. Lys-239 is subject to N6-1-carboxyethyl lysine.

It belongs to the short-chain dehydrogenases/reductases (SDR) family. In terms of assembly, monomer.

The protein localises to the cytoplasm. It carries out the reaction a secondary alcohol + NADP(+) = a ketone + NADPH + H(+). The enzyme catalyses prostaglandin F2alpha + NADP(+) = prostaglandin E2 + NADPH + H(+). It catalyses the reaction prostaglandin E1 + NADP(+) = 15-oxoprostaglandin E1 + NADPH + H(+). The catalysed reaction is menadione + NADPH + H(+) = menadiol + NADP(+). It carries out the reaction prostaglandin D2 + NADP(+) = 15-oxoprostaglandin D2 + NADPH + H(+). The enzyme catalyses prostaglandin E2 + NADP(+) = 15-oxoprostaglandin E2 + NADPH + H(+). It catalyses the reaction prostaglandin F2alpha + NADP(+) = 15-oxoprostaglandin F2alpha + NADPH + H(+). The catalysed reaction is daunorubicin + NADPH + H(+) = 13-dihydrodaunorubicin + NADP(+). It carries out the reaction S-nitrosoglutathione + NADPH + H(+) = S-(hydroxysulfenamide)glutathione + NADP(+). The enzyme catalyses a primary alcohol + NADP(+) = an aldehyde + NADPH + H(+). It catalyses the reaction cortisol + NADPH + H(+) = 20beta-dihydrocortisol + NADP(+). The catalysed reaction is corticosterone + NADPH + H(+) = 20beta-dihydrocorticosterone + NADP(+). NADPH-dependent reductase with broad substrate specificity. Catalyzes the reduction of a wide variety of carbonyl compounds including quinones, prostaglandins, menadione, plus various xenobiotics. Catalyzes the reduction of the antitumor anthracyclines doxorubicin and daunorubicin to the cardiotoxic compounds doxorubicinol and daunorubicinol. Can convert prostaglandin E to prostaglandin F2-alpha. Can bind glutathione, which explains its higher affinity for glutathione-conjugated substrates. Catalyzes the reduction of S-nitrosoglutathione. In addition, participates in the glucocorticoid metabolism by catalyzing the NADPH-dependent cortisol/corticosterone into 20beta-dihydrocortisol (20b-DHF) or 20beta-corticosterone (20b-DHB), which are weak agonists of NR3C1 and NR3C2 in adipose tissue. The sequence is that of Carbonyl reductase [NADPH] 1 from Bos taurus (Bovine).